A 217-amino-acid polypeptide reads, in one-letter code: UPF0323 lipoprotein HPSH_01205 (217 aa).

Residues 1–27 (MKKPYRKISDYAIVGGLSALVMVSIVG) form the signal peptide. The N-palmitoyl cysteine moiety is linked to residue cysteine 28. Cysteine 28 is lipidated: S-diacylglycerol cysteine. Over residues 160 to 171 (QRTYKSPQAYQR) the composition is skewed to polar residues. The tract at residues 160 to 217 (QRTYKSPQAYQRSQNSFSKSAPSASSMGGASKGQSGFFGSSRPTSSPAVSSGTRGFNS) is disordered. Residues 172 to 210 (SQNSFSKSAPSASSMGGASKGQSGFFGSSRPTSSPAVSS) are compositionally biased toward low complexity.

Belongs to the UPF0323 family.

The protein resides in the cell membrane. In Helicobacter pylori (strain Shi470), this protein is UPF0323 lipoprotein HPSH_01205.